The sequence spans 385 residues: Probable splicing factor YJU2B (385 aa).

Positions 1 to 26 are disordered; that stretch reads MGERKGQNKYYPPDFNPEKHGSLNRY. Position 40 is a phosphoserine (serine 40). Residues 182–215 are a coiled coil; that stretch reads LNSMLRRHFREKKKAMQEEEEKDQALQAKANLAI. The interval 256–385 is disordered; it reads FPSAQGPSTS…VADYSDSESE (130 aa). Polar residues predominate over residues 260 to 270; that stretch reads QGPSTSSSKAS. Serine 306 is subject to Phosphoserine. Composition is skewed to polar residues over residues 307–316 and 359–373; these read PQCTADNSLS and GSSQEDLLHPNTPNA.

The protein belongs to the CWC16 family.

The protein resides in the nucleus. Its function is as follows. May be involved in mRNA splicing. This is Probable splicing factor YJU2B from Rattus norvegicus (Rat).